Reading from the N-terminus, the 231-residue chain is Acyltransferase PGAP2 (231 aa).

Residues M1–R22 are Cytoplasmic-facing. Residues L23–M43 form a helical membrane-spanning segment. At L44–R78 the chain is on the lumenal side. The helical transmembrane segment at F79 to Y99 threads the bilayer. At R100–Q110 the chain is on the cytoplasmic side. Residues L111–T131 form a helical membrane-spanning segment. Topologically, residues Y132–F146 are lumenal. Residues I147 to I167 traverse the membrane as a helical segment. The Cytoplasmic segment spans residues V168 to S179. The chain crosses the membrane as a helical span at residues Y180–F200. The Lumenal segment spans residues Y201 to T231.

This sequence belongs to the PGAP2 family.

The protein localises to the golgi apparatus membrane. Involved in the fatty acid remodeling steps of GPI-anchor maturation where the unsaturated acyl chain at sn-2 of inositol phosphate is replaced by a saturated stearoyl chain. May catalyze the second step of the fatty acid remodeling, by reacylating a lyso-GPI intermediate at sn-2 of inositol phosphate by a saturated chain. The fatty acid remodeling steps is critical for the integration of GPI-APs into lipid rafts. In Danio rerio (Zebrafish), this protein is Acyltransferase PGAP2.